The primary structure comprises 689 residues: Protein asunder (689 aa).

Positions 521–550 (NGARLKLSKAKDQYRLLYRELEQLIQLNAT) form a coiled coil. 2 disordered regions span residues 592-619 (PERL…SKRR) and 665-689 (GTKD…SVRS). Low complexity predominate over residues 599–614 (SSVGASGSSSSNSLLK). The Nuclear localization signal (NLS) signature appears at 613 to 619 (LKASKRR).

This sequence belongs to the Integrator subunit 13 family. In terms of assembly, belongs to the multiprotein complex Integrator, at least composed of IntS1, IntS2, IntS3, IntS4, omd/IntS5, IntS6, defl/IntS7, IntS8, IntS9, IntS10, IntS11, IntS12, asun/IntS13, IntS14 and IntS15. The core complex associates with protein phosphatase 2A subunits mts/PP2A and Pp2A-29B, to form the Integrator-PP2A (INTAC) complex. Phosphorylated. In terms of tissue distribution, expressed in nurse cells at stages 9-10 of oogenesis and exported to the oocyte. Also expressed in the follicle cells surrounding the oocyte.

It is found in the nucleus. Its subcellular location is the cytoplasm. The protein localises to the perinuclear region. Functionally, component of the integrator complex, a multiprotein complex that terminates RNA polymerase II (Pol II) transcription in the promoter-proximal region of genes. The integrator complex provides a quality checkpoint during transcription elongation by driving premature transcription termination of transcripts that are unfavorably configured for transcriptional elongation: the complex terminates transcription by (1) catalyzing dephosphorylation of the C-terminal domain (CTD) of Pol II subunit Polr2A/Rbp1 and Spt5, and (2) degrading the exiting nascent RNA transcript via endonuclease activity. The integrator complex is also involved in the 3'-end processing of the U7 snRNA, and also the spliceosomal snRNAs U1, U2, U4 and U5. Plays a role as a regulator of spermatogenesis. Crucial regulator of the mitotic cell cycle and development. Required for the correct dynein-dynactin perinuclear localization important for nucleus-centrosome coupling that occur upon meiotic progression of primary spermatocytes. Plays a role in sperm motility and fertility. May have a role in the PNG/PLU/GNU pathway. The polypeptide is Protein asunder (Drosophila melanogaster (Fruit fly)).